Here is a 322-residue protein sequence, read N- to C-terminus: Cytochrome c biogenesis protein CcsA (322 aa).

Transmembrane regions (helical) follow at residues 9 to 29 (ILTHISFSTISIVITIHLITL), 44 to 64 (GMIVTFFSITGFLVSRWASSG), 143 to 163 (MLLSYATLLGGPPLSAAILII), 226 to 246 (VISLGFTLLTGGILGGAVWAN), 259 to 276 (ETWAFITWTIFAIYLHSR), and 289 to 309 (IASIGFLIIWICYFGINLLGI).

The protein belongs to the CcmF/CycK/Ccl1/NrfE/CcsA family. In terms of assembly, may interact with Ccs1.

The protein localises to the plastid. It is found in the chloroplast thylakoid membrane. In terms of biological role, required during biogenesis of c-type cytochromes (cytochrome c6 and cytochrome f) at the step of heme attachment. This is Cytochrome c biogenesis protein CcsA from Triticum aestivum (Wheat).